Consider the following 416-residue polypeptide: Pigment epithelium-derived factor (416 aa).

The signal sequence occupies residues 1 to 20 (MQALVLLLWTGALLGFGRCQ). Phosphoserine occurs at positions 112 and 225. N-linked (GlcNAc...) asparagine glycosylation is present at Asn283.

Belongs to the serpin family. Interacts with PNPLA2; this interaction stimulates the phospholipase A2 activity of PNPLA2. As to expression, retinal pigment epithelial cells. Located in the interphotoreceptor matrix (IPM) which is between the retinal pigment epithelium and the neural retina.

The protein resides in the secreted. It localises to the melanosome. Neurotrophic protein; induces extensive neuronal differentiation in retinoblastoma cells. Potent inhibitor of angiogenesis. As it does not undergo the S (stressed) to R (relaxed) conformational transition characteristic of active serpins, it exhibits no serine protease inhibitory activity. The protein is Pigment epithelium-derived factor (SERPINF1) of Bos taurus (Bovine).